A 401-amino-acid chain; its full sequence is Nicotinate phosphoribosyltransferase (401 aa).

H221 carries the phosphohistidine; by autocatalysis modification.

It belongs to the NAPRTase family. Post-translationally, transiently phosphorylated on a His residue during the reaction cycle. Phosphorylation strongly increases the affinity for substrates and increases the rate of nicotinate D-ribonucleotide production. Dephosphorylation regenerates the low-affinity form of the enzyme, leading to product release.

It catalyses the reaction nicotinate + 5-phospho-alpha-D-ribose 1-diphosphate + ATP + H2O = nicotinate beta-D-ribonucleotide + ADP + phosphate + diphosphate. Its pathway is cofactor biosynthesis; NAD(+) biosynthesis; nicotinate D-ribonucleotide from nicotinate: step 1/1. Its function is as follows. Catalyzes the synthesis of beta-nicotinate D-ribonucleotide from nicotinate and 5-phospho-D-ribose 1-phosphate at the expense of ATP. This Serratia proteamaculans (strain 568) protein is Nicotinate phosphoribosyltransferase.